The primary structure comprises 291 residues: Acetyl-coenzyme A carboxylase carboxyl transferase subunit beta (291 aa).

Positions 29–291 (IMTKCPDCKK…TGGDLEWLEN (263 aa)) constitute a CoA carboxyltransferase N-terminal domain. Zn(2+) is bound by residues Cys33, Cys36, Cys52, and Cys55. Residues 33-55 (CPDCKKIMLTKELDKNLRVCMNC) form a C4-type zinc finger.

The protein belongs to the AccD/PCCB family. Acetyl-CoA carboxylase is a heterohexamer composed of biotin carboxyl carrier protein (AccB), biotin carboxylase (AccC) and two subunits each of ACCase subunit alpha (AccA) and ACCase subunit beta (AccD). It depends on Zn(2+) as a cofactor.

The protein resides in the cytoplasm. The catalysed reaction is N(6)-carboxybiotinyl-L-lysyl-[protein] + acetyl-CoA = N(6)-biotinyl-L-lysyl-[protein] + malonyl-CoA. Its pathway is lipid metabolism; malonyl-CoA biosynthesis; malonyl-CoA from acetyl-CoA: step 1/1. Its function is as follows. Component of the acetyl coenzyme A carboxylase (ACC) complex. Biotin carboxylase (BC) catalyzes the carboxylation of biotin on its carrier protein (BCCP) and then the CO(2) group is transferred by the transcarboxylase to acetyl-CoA to form malonyl-CoA. This is Acetyl-coenzyme A carboxylase carboxyl transferase subunit beta from Bacillus licheniformis (strain ATCC 14580 / DSM 13 / JCM 2505 / CCUG 7422 / NBRC 12200 / NCIMB 9375 / NCTC 10341 / NRRL NRS-1264 / Gibson 46).